Consider the following 550-residue polypeptide: Methionine--tRNA ligase (550 aa).

The 'HIGH' region motif lies at 12-22 (PYANGPLHFGH). 4 residues coordinate Zn(2+): Cys-144, Cys-147, Cys-157, and Cys-160. A 'KMSKS' region motif is present at residues 330–334 (QFSKS). Lys-333 is a binding site for ATP.

This sequence belongs to the class-I aminoacyl-tRNA synthetase family. MetG type 1 subfamily. Monomer. It depends on Zn(2+) as a cofactor.

The protein resides in the cytoplasm. The catalysed reaction is tRNA(Met) + L-methionine + ATP = L-methionyl-tRNA(Met) + AMP + diphosphate. In terms of biological role, is required not only for elongation of protein synthesis but also for the initiation of all mRNA translation through initiator tRNA(fMet) aminoacylation. The sequence is that of Methionine--tRNA ligase from Chlamydia caviae (strain ATCC VR-813 / DSM 19441 / 03DC25 / GPIC) (Chlamydophila caviae).